The sequence spans 84 residues: Toxin Acra3 (84 aa).

Residues 1-17 form the signal peptide; the sequence is MKIIFLVLMMILSEVYS. In terms of domain architecture, LCN-type CS-alpha/beta spans 19-82; it reads RDGYPVHDGT…VYGDDGIFCK (64 aa). Disulfide bonds link C30–C81, C34–C57, C43–C62, and C47–C64. S83 is modified (serine amide).

Belongs to the long (4 C-C) scorpion toxin superfamily. Sodium channel inhibitor family. Beta subfamily. Expressed by the venom gland.

The protein localises to the secreted. Toxin with unknown target. In vivo, induces severe neurotoxic events in mice such as excitability and convulsions, leading to the death of the animals within a few minutes after injection. Exerts very strong cytotoxic effect on a mouse brain tumor cell line (BC3H1) (IC(50)=5 mg/ml). It exerts its effects by inducing a stronger necrosis than apoptosis in BC3H1 cells. In Androctonus crassicauda (Arabian fat-tailed scorpion), this protein is Toxin Acra3.